A 214-amino-acid chain; its full sequence is tRNA (guanine-N(7)-)-methyltransferase (214 aa).

Positions 43, 68, 99, and 121 each coordinate S-adenosyl-L-methionine. Asp-121 is a catalytic residue. Substrate is bound by residues Lys-125, Asp-157, and 194-197 (TEYE).

Belongs to the class I-like SAM-binding methyltransferase superfamily. TrmB family.

It carries out the reaction guanosine(46) in tRNA + S-adenosyl-L-methionine = N(7)-methylguanosine(46) in tRNA + S-adenosyl-L-homocysteine. The protein operates within tRNA modification; N(7)-methylguanine-tRNA biosynthesis. Its function is as follows. Catalyzes the formation of N(7)-methylguanine at position 46 (m7G46) in tRNA. This chain is tRNA (guanine-N(7)-)-methyltransferase, found in Alkaliphilus metalliredigens (strain QYMF).